A 346-amino-acid polypeptide reads, in one-letter code: uncharacterized protein (346 aa).

It belongs to the PhyH family.

Its subcellular location is the cytoplasm. This is an uncharacterized protein from Saccharomyces cerevisiae (strain ATCC 204508 / S288c) (Baker's yeast).